The chain runs to 1507 residues: DE-cadherin (1507 aa).

The signal sequence occupies residues 1-69 (MSTSVQRMSR…AISLLSPALA (69 aa)). The propeptide occupies 70-261 (LHSPPDKNFS…IYLKRPIDKR (192 aa)). Cadherin domains follow at residues 97 to 195 (VKEE…APAF), 204 to 301 (MSEN…PPSF), 311 to 412 (LKEN…IPYY), 420 to 522 (ILEN…KPHF), 532 to 633 (LLED…TILE), 631 to 733 (ILEE…APFL), and 741 to 835 (WQEN…NDNA). The Extracellular segment spans residues 262-1328 (PGQSYAIIVR…VAFSFGIDRN (1067 aa)). Residues N317, N466, and N552 are each glycosylated (N-linked (GlcNAc...) asparagine). Residues N766, N949, N983, N999, and N1073 are each glycosylated (N-linked (GlcNAc...) asparagine). Residues 1084–1123 (VQAQCVCEAPLMRRCLNGGSPRYGENDVCDCIDGFTGPHC) enclose the EGF-like domain. Disulfide bonds link C1098–C1112 and C1114–C1123. One can recognise a Laminin G-like domain in the interval 1125–1313 (LVSVAFYGSG…SVFRNIDSGC (189 aa)). N-linked (GlcNAc...) asparagine glycosylation is found at N1145, N1274, and N1290. C1287 and C1313 are oxidised to a cystine. The chain crosses the membrane as a helical span at residues 1329 to 1349 (FIIAIIVCLALLLIILLAVVV). The Cytoplasmic segment spans residues 1350–1507 (QKKQKNGWHE…NVDDDQGWRI (158 aa)). Positions 1350–1507 (QKKQKNGWHE…NVDDDQGWRI (158 aa)) are interaction with Inx2. The segment at 1488–1507 (YGEEPSDTDSNVDDDQGWRI) is disordered. The residue at position 1493 (S1493) is a Phosphoserine.

In terms of assembly, interacts (via cytoplasmic region) with Inx2 (via cytoplasmic loop). Interacts with Hakai. Interacts with Myo31DF. Post-translationally, N-glycosylation is important for biosynthesis and function. In terms of tissue distribution, in early stage 9 and stage 10 oocytes, expressed in border cells, strongly expressed in polar cells and very weakly expressed in the nurse cells (at protein level). In the embryo, expressed in the leading edge cells of the dorsal epidermis (at protein level). Stage 10 embryos exhibit intense expression in epithelial cells. Stage 14 embryos show expression in the hindgut (at the apical poles of cell-cell boundaries), at the apical junctions of tracheal cells and in the dorsal longitudinal trunk. In stage 16 embryos the glial midline cells of the central nervous system show strong expression.

The protein resides in the cell membrane. Its subcellular location is the apical cell membrane. Cadherins are calcium-dependent cell adhesion proteins. In connecting cells they preferentially interact with themselves in a homophilic manner; cadherins may thus contribute to the sorting of heterogeneous cell types. During oogenesis, integral component of the guidance mechanisms that regulate the directional persistent collective migration of the border cell (BC) cluster through the nurse cells to the oocyte. Functions downstream of the two chemoattractant receptors, Pvr and Egfr, to promote BC adhesion between the leader cells of the migrating cluster and the surrounding nurse cells. This adhesion increases Rac1 signaling in the leading cells, which in turn stabilizes DE-cadherin/DE-cadherin adhesions through the formation of forward-directed protrusions which attach/detach to the surrounding nurse cells in order to pull the cluster through the egg chamber to the oocyte. Within the BC cluster, also promotes adhesion between BCs, and between BCs and polar cells which enables the lead BC to communicate direction to the other cells in the cluster, providing polarity to each individual cell and ensuring collective behavior. May function in cell intercalation in the lateral epidermis during germband extension. Contributes to the determination of body left-right asymmetry by enhancing Myo31DF activity and inhibiting Myo61F activity. This chain is DE-cadherin, found in Drosophila melanogaster (Fruit fly).